Consider the following 430-residue polypeptide: Neuropeptide FF receptor 1 (430 aa).

The segment at 1–20 is disordered; sequence MEGEPSQPPNSSWPLSQNGT. At 1–43 the chain is on the extracellular side; sequence MEGEPSQPPNSSWPLSQNGTNTEATPATNLTFSSYYQHTSPVA. Residues 9-20 show a composition bias toward polar residues; the sequence is PNSSWPLSQNGT. 3 N-linked (GlcNAc...) asparagine glycosylation sites follow: Asn10, Asn18, and Asn29. A helical membrane pass occupies residues 44–64; it reads AMFIVAYALIFLLCMVGNTLV. Topologically, residues 65 to 80 are cytoplasmic; that stretch reads CFIVLKNRHMHTVTNM. Residues 81–101 form a helical membrane-spanning segment; that stretch reads FILNLAVSDLLVGIFCMPTTL. Residues 102–117 lie on the Extracellular side of the membrane; sequence VDNLITGWPFDNATCK. Residue Asn113 is glycosylated (N-linked (GlcNAc...) asparagine). Cys116 and Cys203 form a disulfide bridge. The chain crosses the membrane as a helical span at residues 118-138; that stretch reads MSGLVQGMSVSASVFTLVAIA. The Cytoplasmic portion of the chain corresponds to 139 to 158; sequence VERFRCIVHPFREKLTLRKA. Residues 159–179 form a helical membrane-spanning segment; sequence LVTIAVIWALALLIMCPSAVT. Residues 180 to 214 lie on the Extracellular side of the membrane; that stretch reads LTVTREEHHFMVDARNRSYPLYSCWEAWPEKGMRR. Residue Asn195 is glycosylated (N-linked (GlcNAc...) asparagine). A helical transmembrane segment spans residues 215 to 235; it reads VYTTVLFSHIYLAPLALIVVM. Topologically, residues 236–271 are cytoplasmic; sequence YARIARKLCQAPGPAPGGEEAADPRASRRRARVVHM. The helical transmembrane segment at 272-292 threads the bilayer; it reads LVMVALFFTLSWLPLWALLLL. The Extracellular portion of the chain corresponds to 293-307; sequence IDYGQLSAPQLHLVT. A helical membrane pass occupies residues 308 to 328; the sequence is VYAFPFAHWLAFFNSSANPII. At 329 to 430 the chain is on the cytoplasmic side; it reads YGYFNENFRR…LPLTIPAWDI (102 aa). Positions 379-404 are enriched in low complexity; that stretch reads SDSGLPSESGPSSGAPRPGRLPLRNG. The tract at residues 379–413 is disordered; the sequence is SDSGLPSESGPSSGAPRPGRLPLRNGRVAHHGLPR.

It belongs to the G-protein coupled receptor 1 family.

The protein resides in the cell membrane. Functionally, receptor for NPAF (A-18-F-amide) and NPFF (F-8-F-amide) neuropeptides, also known as morphine-modulating peptides. Can also be activated by a variety of naturally occurring or synthetic FMRF-amide like ligands. This receptor mediates its action by association with G proteins that activate a phosphatidylinositol-calcium second messenger system. The chain is Neuropeptide FF receptor 1 from Homo sapiens (Human).